The following is a 203-amino-acid chain: Outer-membrane lipoprotein LolB (203 aa).

The first 18 residues, 1-18, serve as a signal peptide directing secretion; it reads MTLRSFLIFFLSSLILAG. Cys-19 carries the N-palmitoyl cysteine lipid modification. Residue Cys-19 is the site of S-diacylglycerol cysteine attachment.

The protein belongs to the LolB family. In terms of assembly, monomer.

The protein localises to the cell outer membrane. Plays a critical role in the incorporation of lipoproteins in the outer membrane after they are released by the LolA protein. The polypeptide is Outer-membrane lipoprotein LolB (Vibrio parahaemolyticus serotype O3:K6 (strain RIMD 2210633)).